Here is a 723-residue protein sequence, read N- to C-terminus: BTB/POZ domain-containing protein 18 (723 aa).

The 69-residue stretch at 34–102 folds into the BTB domain; the sequence is CDALLQAEGE…LYTSEMEVSQ (69 aa). Disordered stretches follow at residues 150 to 176, 188 to 350, and 370 to 394; these read APIS…PSPL, EGAH…EEGQ, and EPPL…PSGT. 2 stretches are compositionally biased toward polar residues: residues 162-174 and 195-205; these read RPQT…QTPS and NLPNADSLSDT. 2 stretches are compositionally biased toward low complexity: residues 217–227 and 271–286; these read QESRSSPSSQR and TSTP…SMPT. Composition is skewed to basic and acidic residues over residues 303 to 312 and 327 to 336; these read QGVDKQKPGE and KPAENKKQSP. The residue at position 414 (serine 414) is a Phosphoserine. The tract at residues 603-637 is disordered; the sequence is TPDLEITSSQPLDGQGEKLLHFDSSDPSQRSYNHL. The segment covering 617-626 has biased composition (basic and acidic residues); it reads QGEKLLHFDS. Over residues 627 to 636 the composition is skewed to polar residues; sequence SDPSQRSYNH. Phosphoserine is present on residues serine 682 and serine 683. Positions 699 to 723 are disordered; that stretch reads LGPTSVPSVWPDPSSESETEVDILT. Positions 713–723 are enriched in acidic residues; the sequence is SESETEVDILT.

In terms of tissue distribution, expressed in testis.

The protein resides in the nucleus. Its function is as follows. Specifically required during spermatogenesis to promote expression of piRNA precursors. The piRNA metabolic process mediates the repression of transposable elements during meiosis by forming complexes composed of piRNAs and Piwi proteins and governs the methylation and subsequent repression of transposons, which is essential for the germline integrity. Acts by facilitating transcription elongation at piRNA loci during pachytene. The sequence is that of BTB/POZ domain-containing protein 18 from Mus musculus (Mouse).